Consider the following 113-residue polypeptide: MNIIETLEKEQLRTDIPDFRPGDTVRVHVKVVEGNRERIQIFEGVVIGRRGRGINETFTVRRVSYGVAVERIFPLHSPRLERIEVVRHGKVRRAKLYYLRERVGKAARIKEER.

Belongs to the bacterial ribosomal protein bL19 family.

Its function is as follows. This protein is located at the 30S-50S ribosomal subunit interface and may play a role in the structure and function of the aminoacyl-tRNA binding site. This Moorella thermoacetica (strain ATCC 39073 / JCM 9320) protein is Large ribosomal subunit protein bL19.